Consider the following 273-residue polypeptide: MLLIDVGNSHVVFGIQGENGGRVCVRELFRLAPDARKTQDEYSLLIHALCERAGVGRASLRDAFISSVVPVLTKTIADAVAQISGVQPVVFGPWAYEHLPVRIPEPVRAEIGTDLVANAVAAYVHFRSACVVVDCGTALTFTAVDGTGLIQGVAIAPGLRTAVQSLHTGTAQLPLVPLALPDSVLGKDTTHAVQAGVVRGTLFVIRAMIAQCQKELGCRCAAVITGGLSRLFSSEVDFPPIDAQLTLSGLAHIARLVPTSLLPPATVSGSSGN.

5-12 (DVGNSHVV) provides a ligand contact to ATP. Residue 112–115 (GTDL) participates in substrate binding. Residue Asp114 is the Proton acceptor of the active site. Asp134 serves as a coordination point for K(+). Thr137 is a binding site for ATP. Residue Thr189 participates in substrate binding.

Belongs to the type III pantothenate kinase family. In terms of assembly, homodimer. NH4(+) is required as a cofactor. K(+) serves as cofactor.

Its subcellular location is the cytoplasm. The enzyme catalyses (R)-pantothenate + ATP = (R)-4'-phosphopantothenate + ADP + H(+). Its pathway is cofactor biosynthesis; coenzyme A biosynthesis; CoA from (R)-pantothenate: step 1/5. In terms of biological role, catalyzes the phosphorylation of pantothenate (Pan), the first step in CoA biosynthesis. The protein is Type III pantothenate kinase of Treponema pallidum (strain Nichols).